Here is a 428-residue protein sequence, read N- to C-terminus: Sporulation kinase B (428 aa).

The Cytoplasmic segment spans residues 1-6; the sequence is MEILKD. Residues 7–27 form a helical membrane-spanning segment; that stretch reads YLLHICFILFPILLYQVFWLG. The Extracellular portion of the chain corresponds to 28 to 37; sequence KPAILVPKIN. Residues 38-58 form a helical membrane-spanning segment; it reads SGLVTLFACGASVLCIIFPIH. At 59-68 the chain is on the cytoplasmic side; it reads EMDYIQYGLQ. The helical transmembrane segment at 69–89 threads the bilayer; sequence MIPVIICLFYISTASGLTVAA. The Extracellular segment spans residues 90-99; sequence SVLCFELLFY. Residues 100-120 form a helical membrane-spanning segment; it reads EPSAMFVFTLLPFLIIIPILF. At 121–132 the chain is on the cytoplasmic side; it reads QKKWPFMSKAKK. The helical transmembrane segment at 133 to 153 threads the bilayer; it reads LLLSLLISCVEIFLFFASSWI. The Extracellular segment spans residues 154 to 166; the sequence is LSALNILNFQKSG. Residues 167–187 traverse the membrane as a helical segment; that stretch reads IFVYEAAVSGLFRSSVLLLSI. Residues 188 to 428 are Cytoplasmic-facing; that stretch reads YIIESIAENI…TIKLPADLPH (241 aa). Positions 218–426 constitute a Histidine kinase domain; that stretch reads SVAHEVRNPL…TVTIKLPADL (209 aa). His-221 is subject to Phosphohistidine; by autocatalysis.

It is found in the cell membrane. The catalysed reaction is ATP + protein L-histidine = ADP + protein N-phospho-L-histidine.. Its function is as follows. Phosphorylates the sporulation-regulatory proteins spo0A and spo0F. Spo0F is required for the KinB activity. This chain is Sporulation kinase B (kinB), found in Bacillus subtilis (strain 168).